The primary structure comprises 667 residues: MFYPQEFDVIVVGGGHAGTEAALAAARMGCKTLLLTHNIETLGQMSCNPSIGGIGKGHLVKEVDAMGGAMALATDEGGIQFRILNGSKGPAVRATRAQADRILYKAAIRRMIENQPNLWLFQQAVDDLMVEGDRVVGAVTQVGIKFRARTVVLTAGTFLDGKIHVGLNNYPAGRAGDPPAVSLSARLKELKLPQGRLKTGTPPRIDGRSIDFSKCGVQPGDGMPGGTPGPVPVFSFMGGNVPHPKQVPCWITHTNERTHDIIRSGFDRSPMFTGKIDGVGPRYCPSVEDKINRFAGKDSHQIFLEPEGLTTHEIYPNGISTSLPFDIQYALVRSMAGMENAHILRPGYAIEYDYFDPRALKTNFETRAIGGLFFAGQINGTTGYEEAAAQGMFAGINAALQCQEKEAWLPKRDEAYLGVLVDDLITKGVTEPYRMFTSRAEFRLMLREDNADMRLTEKGRELGLVDDARWDAFNRKRDIVSRETQRLRALWINPNNLPASEAERVLGKAIEREYNLADLLRRPDVNYAGLMSLDGGRYANPEIPTGNEDVSRETSTDSALPADLVKSVIEQIEITAKYAGYIDLQKVEVERASHYENLKLPADLDYLQVSALSFEARQMLSKHRPETLGLASRIQGITPATISLLLVHLKKNLWKNTTPLKSAEAEA.

13 to 18 contacts FAD; that stretch reads GGGHAG. 280–294 is an NAD(+) binding site; that stretch reads GPRYCPSVEDKINRF.

The protein belongs to the MnmG family. In terms of assembly, homodimer. Heterotetramer of two MnmE and two MnmG subunits. FAD is required as a cofactor.

It localises to the cytoplasm. Its function is as follows. NAD-binding protein involved in the addition of a carboxymethylaminomethyl (cmnm) group at the wobble position (U34) of certain tRNAs, forming tRNA-cmnm(5)s(2)U34. The sequence is that of tRNA uridine 5-carboxymethylaminomethyl modification enzyme MnmG from Polaromonas naphthalenivorans (strain CJ2).